A 428-amino-acid polypeptide reads, in one-letter code: Dihydroorotase (428 aa).

The Zn(2+) site is built by H59 and H61. Residues 61–63 (HLR) and N93 each bind substrate. Residues D151, H178, and H231 each coordinate Zn(2+). N277 serves as a coordination point for substrate. Residue D304 participates in Zn(2+) binding. D304 is a catalytic residue. Substrate-binding positions include H308 and 322-323 (FG).

It belongs to the metallo-dependent hydrolases superfamily. DHOase family. Class I DHOase subfamily. Zn(2+) serves as cofactor.

The enzyme catalyses (S)-dihydroorotate + H2O = N-carbamoyl-L-aspartate + H(+). The protein operates within pyrimidine metabolism; UMP biosynthesis via de novo pathway; (S)-dihydroorotate from bicarbonate: step 3/3. Catalyzes the reversible cyclization of carbamoyl aspartate to dihydroorotate. The chain is Dihydroorotase from Bacillus pumilus (strain SAFR-032).